Reading from the N-terminus, the 508-residue chain is 2-isopropylmalate synthase (508 aa).

One can recognise a Pyruvate carboxyltransferase domain in the interval 5–267 (IKIFDTTLRD…THRIDTTQIY (263 aa)). Mn(2+)-binding residues include D14, H202, H204, and N238. A regulatory domain region spans residues 390–508 (VIDSFQINSG…SEIGESIISQ (119 aa)).

Belongs to the alpha-IPM synthase/homocitrate synthase family. LeuA type 1 subfamily. In terms of assembly, homodimer. Mn(2+) is required as a cofactor.

Its subcellular location is the cytoplasm. The catalysed reaction is 3-methyl-2-oxobutanoate + acetyl-CoA + H2O = (2S)-2-isopropylmalate + CoA + H(+). It participates in amino-acid biosynthesis; L-leucine biosynthesis; L-leucine from 3-methyl-2-oxobutanoate: step 1/4. Functionally, catalyzes the condensation of the acetyl group of acetyl-CoA with 3-methyl-2-oxobutanoate (2-ketoisovalerate) to form 3-carboxy-3-hydroxy-4-methylpentanoate (2-isopropylmalate). The protein is 2-isopropylmalate synthase of Ruminiclostridium cellulolyticum (strain ATCC 35319 / DSM 5812 / JCM 6584 / H10) (Clostridium cellulolyticum).